We begin with the raw amino-acid sequence, 526 residues long: Vang-like protein 2 (526 aa).

Positions 1 to 95 (MDNESQYSGY…NEDLTRASKE (95 aa)) are disordered. At 1–109 (MDNESQYSGY…SPLECRRFAG (109 aa)) the chain is on the cytoplasmic side. Basic residues predominate over residues 15 to 33 (SHSRSSRKHRDRRDRHRSK). Basic and acidic residues-rich tracts occupy residues 34 to 43 (SRDSSSRGDK) and 58 to 68 (ESTRGDDRDDN). The segment covering 70–83 (GETTTVVTGTSEHS) has biased composition (low complexity). Positions 84–95 (VSNEDLTRASKE) are enriched in basic and acidic residues. A helical transmembrane segment spans residues 110-130 (PIVSGVLGLFALLTPLAFLLL). The Extracellular segment spans residues 131–148 (PQLLWRDSLEPCGTPCEG). Residues 149-169 (LYVSLAFKLLVLLISSWALFL) form a helical membrane-spanning segment. Residues 170-178 (RPSRSTLPR) are Cytoplasmic-facing. Residues 179–199 (FFVFRCLLMALVFLFVASYWL) form a helical membrane-spanning segment. Topologically, residues 200–215 (FYGVRVLEPRERDYRG) are extracellular. A helical membrane pass occupies residues 216–236 (IVGYAVSLVDALLFIQYLALV). The Cytoplasmic segment spans residues 237–526 (LLEVRHLRPA…VMRLQSETSV (290 aa)). The PDZ-binding signature appears at 523–526 (ETSV).

This sequence belongs to the Vang family. In terms of assembly, interacts with the PDZ domain of dvl2/dsh. In terms of tissue distribution, ubiquitously expressed at the 4-cell stage. In early somitogenesis, becomes more abundant in anterior neural tissue where expression is seen in the neural tube but not in the notochord.

The protein localises to the cell membrane. Plays a role in non-canonical Wnt/planar cell polarity (PCP) signaling to regulate convergent extension cell movements during gastrulation. Acts together with scrib and prickle1 and localizes prickle1 and dvl2/dsh to the plasma membrane. Has an overlapping role with kny during both convergent extension and eye development. In the eye, involved in establishing proper alignment of the anterior neural plate and midline cells expressing shha and shhb/twhh. Has indirect effects on a number of other developmental processes including notochord shape formation, neural progenitor cell morphogenesis, segregation of somites and adaxial cell development. Together with prickle1, required for the posterior (caudal) movement of branchiomotor neurons in the hindbrain independently of, and a few hours after, convergent extension. May be required for cell surface localization of fzd3 and fzd6 in the inner ear. The polypeptide is Vang-like protein 2 (Danio rerio (Zebrafish)).